The chain runs to 192 residues: Erythropoietin (192 aa).

A signal peptide spans 1-27 (MGVHECPAWLWLLLSLVSLPLGLPVPG). Intrachain disulfides connect cysteine 34–cysteine 187 and cysteine 56–cysteine 60. A glycan (N-linked (GlcNAc...) asparagine) is linked at asparagine 51. N-linked (GlcNAc...) asparagine glycosylation is found at asparagine 65 and asparagine 110. Serine 152 is a glycosylation site (O-linked (GalNAc...) serine).

Belongs to the EPO/TPO family. Produced by kidney or liver of adult mammals and by liver of fetal or neonatal mammals.

The protein resides in the secreted. Its function is as follows. Hormone involved in the regulation of erythrocyte proliferation and differentiation and the maintenance of a physiological level of circulating erythrocyte mass. Binds to EPOR leading to EPOR dimerization and JAK2 activation thereby activating specific downstream effectors, including STAT1 and STAT3. This Macaca fascicularis (Crab-eating macaque) protein is Erythropoietin (EPO).